A 128-amino-acid chain; its full sequence is uncharacterized protein (128 aa).

The tract at residues 24–43 (KRTQNNTEQASRAINSPLQS) is disordered. Polar residues predominate over residues 26–43 (TQNNTEQASRAINSPLQS).

This is an uncharacterized protein from Homo sapiens (Human).